We begin with the raw amino-acid sequence, 1064 residues long: DNA-directed RNA polymerase subunit beta (1064 aa).

This sequence belongs to the RNA polymerase beta chain family. In terms of assembly, in plastids the minimal PEP RNA polymerase catalytic core is composed of four subunits: alpha, beta, beta', and beta''. When a (nuclear-encoded) sigma factor is associated with the core the holoenzyme is formed, which can initiate transcription.

It is found in the plastid. It localises to the chloroplast. It carries out the reaction RNA(n) + a ribonucleoside 5'-triphosphate = RNA(n+1) + diphosphate. In terms of biological role, DNA-dependent RNA polymerase catalyzes the transcription of DNA into RNA using the four ribonucleoside triphosphates as substrates. The protein is DNA-directed RNA polymerase subunit beta of Jasminum nudiflorum (Winter jasmine).